A 365-amino-acid chain; its full sequence is Succinyl-diaminopimelate desuccinylase (365 aa).

Zn(2+) is bound at residue histidine 65. Aspartate 67 is a catalytic residue. Aspartate 96 is a Zn(2+) binding site. Glutamate 126 acts as the Proton acceptor in catalysis. The Zn(2+) site is built by glutamate 127, glutamate 155, and histidine 340.

Belongs to the peptidase M20A family. DapE subfamily. In terms of assembly, homodimer. It depends on Zn(2+) as a cofactor. Requires Co(2+) as cofactor.

It catalyses the reaction N-succinyl-(2S,6S)-2,6-diaminopimelate + H2O = (2S,6S)-2,6-diaminopimelate + succinate. It participates in amino-acid biosynthesis; L-lysine biosynthesis via DAP pathway; LL-2,6-diaminopimelate from (S)-tetrahydrodipicolinate (succinylase route): step 3/3. Its function is as follows. Catalyzes the hydrolysis of N-succinyl-L,L-diaminopimelic acid (SDAP), forming succinate and LL-2,6-diaminopimelate (DAP), an intermediate involved in the bacterial biosynthesis of lysine and meso-diaminopimelic acid, an essential component of bacterial cell walls. The sequence is that of Succinyl-diaminopimelate desuccinylase from Campylobacter jejuni subsp. doylei (strain ATCC BAA-1458 / RM4099 / 269.97).